Consider the following 440-residue polypeptide: Polyprenol-phosphate-mannose-dependent alpha-(1-2)-phosphatidylinositol mannoside mannosyltransferase (440 aa).

11 helical membrane passes run 15–35, 87–107, 109–129, 144–161, 164–184, 193–213, 224–244, 281–301, 316–336, 360–380, and 395–415; these read LAPTIAWRVFQLLTLAGVLWV, LAAIAFAPFAWLSLPLASSAI, ATTLVLLIVATTIVLTRLDVW, AWLAAAMVAPAVIYLEPI, NFEFGQINVVLMTLVIADCVP, LLLGLAIALKLTPAVFLLYFL, TAATAVVASLAGFALAWSDSV, PRFILWVLACFAVLALTVWAA, APVLALVCVALFGLVVSPVSW, VWFTALTAAGLALTVWTPITL, and LAGGSYVWWAFAVIVVIGLVS. Residues 419-440 are disordered; sequence THTGDAHETDEPLVPLARGEAG.

This sequence belongs to the glycosyltransferase 87 family.

The protein resides in the cell membrane. It functions in the pathway phospholipid metabolism; phosphatidylinositol metabolism. In terms of biological role, responsible for the addition of alpha-(1-2) mannose branches to the linear mannan core on the biosynthetic pathway to mature Lipoarabinomannan (LAM). The chain is Polyprenol-phosphate-mannose-dependent alpha-(1-2)-phosphatidylinositol mannoside mannosyltransferase from Mycolicibacterium smegmatis (strain ATCC 700084 / mc(2)155) (Mycobacterium smegmatis).